The primary structure comprises 205 residues: ATP synthase subunit b (205 aa).

The helical transmembrane segment at 45–65 threads the bilayer; that stretch reads LGMTATAWVSLAMVIVILLLL.

This sequence belongs to the ATPase B chain family. As to quaternary structure, F-type ATPases have 2 components, F(1) - the catalytic core - and F(0) - the membrane proton channel. F(1) has five subunits: alpha(3), beta(3), gamma(1), delta(1), epsilon(1). F(0) has three main subunits: a(1), b(2) and c(10-14). The alpha and beta chains form an alternating ring which encloses part of the gamma chain. F(1) is attached to F(0) by a central stalk formed by the gamma and epsilon chains, while a peripheral stalk is formed by the delta and b chains.

Its subcellular location is the cell inner membrane. Its function is as follows. F(1)F(0) ATP synthase produces ATP from ADP in the presence of a proton or sodium gradient. F-type ATPases consist of two structural domains, F(1) containing the extramembraneous catalytic core and F(0) containing the membrane proton channel, linked together by a central stalk and a peripheral stalk. During catalysis, ATP synthesis in the catalytic domain of F(1) is coupled via a rotary mechanism of the central stalk subunits to proton translocation. Component of the F(0) channel, it forms part of the peripheral stalk, linking F(1) to F(0). The chain is ATP synthase subunit b from Rhizorhabdus wittichii (strain DSM 6014 / CCUG 31198 / JCM 15750 / NBRC 105917 / EY 4224 / RW1) (Sphingomonas wittichii).